Reading from the N-terminus, the 515-residue chain is Galactose-1-phosphate uridylyltransferase (515 aa).

Belongs to the galactose-1-phosphate uridylyltransferase type 2 family.

It localises to the cytoplasm. The enzyme catalyses alpha-D-galactose 1-phosphate + UDP-alpha-D-glucose = alpha-D-glucose 1-phosphate + UDP-alpha-D-galactose. The protein operates within carbohydrate metabolism; galactose metabolism. Transfers the UMP unit from UDP-glucose (UDP-Glc) to Gal1P. Can also transfer the UMP unit to GlcNAc1P and GalNAc1P. Involved in the general galactose metabolism, and also involved in the lacto-N-biose I/galacto-N-biose (LNB/GNB) degradation pathway, which is important for host intestinal colonization by bifidobacteria. The chain is Galactose-1-phosphate uridylyltransferase from Bifidobacterium longum subsp. longum (strain ATCC 15707 / DSM 20219 / JCM 1217 / NCTC 11818 / E194b).